The primary structure comprises 218 residues: Pyridoxine/pyridoxamine 5'-phosphate oxidase (218 aa).

Residues 14 to 17 (RREY) and Lys72 contribute to the substrate site. FMN-binding positions include 67–72 (RIVLLK), 82–83 (YT), Arg88, Lys89, and Gln111. Substrate-binding residues include Tyr129, Arg133, and Ser137. FMN-binding positions include 146 to 147 (QS) and Trp191. A substrate-binding site is contributed by 197 to 199 (RLH). Residue Arg201 coordinates FMN.

The protein belongs to the pyridoxamine 5'-phosphate oxidase family. In terms of assembly, homodimer. The cofactor is FMN.

The catalysed reaction is pyridoxamine 5'-phosphate + O2 + H2O = pyridoxal 5'-phosphate + H2O2 + NH4(+). It catalyses the reaction pyridoxine 5'-phosphate + O2 = pyridoxal 5'-phosphate + H2O2. Its pathway is cofactor metabolism; pyridoxal 5'-phosphate salvage; pyridoxal 5'-phosphate from pyridoxamine 5'-phosphate: step 1/1. It participates in cofactor metabolism; pyridoxal 5'-phosphate salvage; pyridoxal 5'-phosphate from pyridoxine 5'-phosphate: step 1/1. In terms of biological role, catalyzes the oxidation of either pyridoxine 5'-phosphate (PNP) or pyridoxamine 5'-phosphate (PMP) into pyridoxal 5'-phosphate (PLP). In Escherichia coli O139:H28 (strain E24377A / ETEC), this protein is Pyridoxine/pyridoxamine 5'-phosphate oxidase.